The chain runs to 333 residues: FAD-dependent monooxygenase pytG (333 aa).

Residues 6–26 (LPNVSVAIIGAGIGGLTLGAF) form a helical membrane-spanning segment. Residues E38 and R109 each coordinate FAD. N303 carries an N-linked (GlcNAc...) asparagine glycan.

It belongs to the paxM FAD-dependent monooxygenase family. FAD is required as a cofactor.

The protein resides in the membrane. The protein operates within secondary metabolite biosynthesis. Functionally, FAD-dependent monooxygenase; part of the gene cluster that mediates the biosynthesis of pyranterreones, a family of antioxidative compounds. The first step of pyranonigrins biosynthesis is performed by the hybrid PKS-NRPS synthetase pytA that condenses 4 malonyl-CoA units ato the acetyl starter unit by the modular PKS of pytA. The acyl chain is then connected to an L-serine through the amide bond by the modular NRPS of pytA. A tetramic acid is formed and released from the PKS-NRPS pytA to give pyranterreone 5 with the help of the thioesterase pytI. Pyranterreone 5 could be methylated by pytC to afford pyranterreone 6. Both pyranterreones 5 and 6 are subsequently oxidized by the FAD-linked oxidoreductase pytB and the cytochrome P450 monooxygenase pytD to form the fused gamma-pyrone core, resulting in pyranterreones 7 and 11, respectively. The hydroxy group at C-8 of pyranterreones 7 and 11 are dehydrated by the aspartyl protease pytH to form a delta-7 double bond to give pyranterreones 3 and 1, 2 accordingly. The exo-methylene of pyranterreone 3 could be reduced into a pendant methyl by reductase pytE to provide pyranterreone 4, also known as cordylactam. Pyranterreone 4 can be reconverted to pyranterreone 3 through pytB-catalyzed dehydrogenation or further oxidized to pyranterreones 9 and 10. The polypeptide is FAD-dependent monooxygenase pytG (Aspergillus terreus (strain NIH 2624 / FGSC A1156)).